Reading from the N-terminus, the 506-residue chain is DNA nucleotidylexotransferase (506 aa).

Positions 11–17 (SQRKRQK) match the Nuclear localization signal motif. The BRCT domain maps to 27–124 (GYEIKFNKLV…RPVDLEKKYH (98 aa)). Residues 258–262 (VGVKT) form an involved in DNA binding region. A 2'-deoxyribonucleoside 5'-triphosphate contacts are provided by residues 333–338 (GFRRGK) and 342–345 (HDID). Mg(2+)-binding residues include Asp343, Asp345, and Asp430. 445–446 (GW) provides a ligand contact to a 2'-deoxyribonucleoside 5'-triphosphate.

This sequence belongs to the DNA polymerase type-X family. It depends on Mg(2+) as a cofactor.

The protein resides in the nucleus. It carries out the reaction DNA(n) + a 2'-deoxyribonucleoside 5'-triphosphate = DNA(n+1) + diphosphate. Template-independent DNA polymerase which catalyzes the random addition of deoxynucleoside 5'-triphosphate to the 3'-end of a DNA initiator. One of the in vivo functions of this enzyme is the addition of nucleotides at the junction (N region) of rearranged Ig heavy chain and T-cell receptor gene segments during the maturation of B- and T-cells. The chain is DNA nucleotidylexotransferase (DNTT) from Gallus gallus (Chicken).